We begin with the raw amino-acid sequence, 285 residues long: Nudix hydrolase 15, mitochondrial (285 aa).

The N-terminal 23 residues, 1 to 23 (MFLLYRRLPSFARTTTTTLLCKS), are a transit peptide targeting the mitochondrion. At M24 the chain carries N-acetylmethionine. Disordered regions lie at residues 51–72 (RQYK…TDQE) and 129–152 (THSG…GMTA). Residues 99-255 (PKRAAVLICL…DKDYMIWGLT (157 aa)) enclose the Nudix hydrolase domain. The Nudix box signature appears at 140–161 (KAEEDDKDDGMTATREAEEEIG). Residues E155 and E159 each contribute to the Mg(2+) site.

Belongs to the Nudix hydrolase family. The cofactor is Mg(2+). Mn(2+) serves as cofactor. Expressed in roots, leaves, stems and inflorescences.

Its subcellular location is the mitochondrion. In terms of biological role, coenzyme A diphosphatase which mediates the cleavage of oxidized CoA. Can use malonyl-CoA, hexanoyl-CoA, lauroyl-CoA, myristoyl-CoA and palmitoyl-CoA as substrates, but not isobutyryl-CoA or propionyl-CoA. The polypeptide is Nudix hydrolase 15, mitochondrial (NUDT15) (Arabidopsis thaliana (Mouse-ear cress)).